Reading from the N-terminus, the 353-residue chain is uncharacterized protein (353 aa).

The signal sequence occupies residues Met1–Ala20. Residue Cys21 is the site of N-palmitoyl cysteine attachment. Cys21 carries S-diacylglycerol cysteine lipidation.

Its subcellular location is the cell membrane. This is an uncharacterized protein from Bacillus subtilis (strain 168).